Consider the following 358-residue polypeptide: Nuclear receptor subfamily 1 group I member 3 (358 aa).

Positions 18–93 form a DNA-binding region, nuclear receptor; that stretch reads PRNCVVCGDR…VGMRKDMILS (76 aa). The segment at 21 to 41 adopts an NR C4-type zinc-finger fold; that stretch reads CVVCGDRATGYHFHALTCEGC. T48 is subject to Phosphothreonine; by PKC. Residues 57–81 form an NR C4-type zinc finger; that stretch reads CPFAGRCEVSKAQRRHCPACRLQKC. The region spanning 119–358 is the NR LBD domain; sequence QQKELIQTLL…MMPLLGEICS (240 aa).

It belongs to the nuclear hormone receptor family. NR1 subfamily. As to quaternary structure, heterodimer of NR1I3 and RXR. Interacts with PSMC4. Interacts with ECT2. Directly interacts with DNAJC7; this complex may also include HSP90. Interacts with CRY1. Interacts with CRY2 in a ligand-dependent manner. Phosphorylated at Thr-48 by PKC, dephosphorylation of Thr-48 is required for nuclear translocation and activation.

It localises to the nucleus. The protein localises to the cytoplasm. It is found in the cytoskeleton. Its function is as follows. Binds and transactivates the retinoic acid response elements that control expression of the retinoic acid receptor beta 2 and alcohol dehydrogenase 3 genes. Transactivates both the phenobarbital responsive element module of the human CYP2B6 gene and the CYP3A4 xenobiotic response element. This chain is Nuclear receptor subfamily 1 group I member 3 (Nr1i3), found in Rattus norvegicus (Rat).